The chain runs to 122 residues: Large ribosomal subunit protein uL14 (122 aa).

Belongs to the universal ribosomal protein uL14 family. Part of the 50S ribosomal subunit. Forms a cluster with proteins L3 and L19. In the 70S ribosome, L14 and L19 interact and together make contacts with the 16S rRNA in bridges B5 and B8.

Its function is as follows. Binds to 23S rRNA. Forms part of two intersubunit bridges in the 70S ribosome. In Parvibaculum lavamentivorans (strain DS-1 / DSM 13023 / NCIMB 13966), this protein is Large ribosomal subunit protein uL14.